Reading from the N-terminus, the 641-residue chain is Bifunctional enzyme NodQ (641 aa).

The segment at 1 to 458 (MSYVQSIPPH…KSARSAMKNQ (458 aa)) is sulfate adenylyltransferase. The 215-residue stretch at 22 to 236 (KSILRFITCG…YLETVELDPT (215 aa)) folds into the tr-type G domain. The interval 31 to 38 (GSVDDGKS) is G1. 31 to 38 (GSVDDGKS) serves as a coordination point for GTP. A G2 region spans residues 89–93 (GITID). The interval 110-113 (DTPG) is G3. GTP contacts are provided by residues 110–114 (DTPGH) and 165–168 (NKID). The tract at residues 165–168 (NKID) is G4. A G5 region spans residues 202 to 204 (SAR). An adenylyl-sulfate kinase region spans residues 459 to 641 (LPAVLWFTGL…GQMTPLQRPT (183 aa)). 467–474 (GLSGSGKS) is an ATP binding site. Ser-541 acts as the Phosphoserine intermediate in catalysis.

The protein in the C-terminal section; belongs to the APS kinase family. It in the N-terminal section; belongs to the TRAFAC class translation factor GTPase superfamily. Classic translation factor GTPase family. CysN/NodQ subfamily. In terms of assembly, sulfate-activating enzymes, NodP and NodQ, may be physically associated.

The catalysed reaction is sulfate + ATP + H(+) = adenosine 5'-phosphosulfate + diphosphate. The enzyme catalyses adenosine 5'-phosphosulfate + ATP = 3'-phosphoadenylyl sulfate + ADP + H(+). In terms of biological role, proposed to provide activated sulfate for transfer to Nod factor. ATP sulfurylase may be the GTPase, regulating ATP sulfurylase activity. Its function is as follows. APS kinase catalyzes the synthesis of activated sulfate. This chain is Bifunctional enzyme NodQ (nodQ), found in Rhizobium meliloti (strain 1021) (Ensifer meliloti).